Here is a 428-residue protein sequence, read N- to C-terminus: Leucine-rich repeat-containing protein 42 (428 aa).

5 LRR repeats span residues 149–170 (VLCSLCLRNRYLVISEKLEEIK), 174–195 (ELTCLDLSCCKLGDEHELLEHL), 202–222 (SVTQLRLKDNCLSDAGVRKMT), 234–255 (NLSLLDLSCNPEITDAGIGYLF), and 259–280 (KLNCLDISGTGLKDIKAVKHKL). The segment at 379-412 (KHEALSSQESKKSKKRAFEEPEKEQGSSSQTSKQ) is disordered. The span at 394-403 (RAFEEPEKEQ) shows a compositional bias: basic and acidic residues. A phosphoserine mark is found at Ser-406 and Ser-407.

It belongs to the LRRC42 family.

This Bos taurus (Bovine) protein is Leucine-rich repeat-containing protein 42 (LRRC42).